Here is a 295-residue protein sequence, read N- to C-terminus: MAVDAKLIKELREITQAGMMDCKKALEASDNNIDNAIVWLRENGLAKAAKKTDRVAAEGIALAKENDQKIVILEVNSETDFVAKNEKFLSLVDEIANALLSSNASSLEEGLQVKTNSGLTIEQSLISATATIGEKIALRRFELVNKTSGSSVIYNHANKRVSTLLVFDNKLDSTDAYNVAMHVAAMAPKYINMDQIPDDFKNAEMHIIKEQAKDDAKLQAKPANVLENILKGKLSKRLAEVSLLDQLFVIDESFKVGDFLKSKHVSLVKMIRYEVGEGIEKVVTNFADEVAAQLK.

Residues 79-82 (TDFV) are involved in Mg(2+) ion dislocation from EF-Tu.

Belongs to the EF-Ts family.

The protein localises to the cytoplasm. Its function is as follows. Associates with the EF-Tu.GDP complex and induces the exchange of GDP to GTP. It remains bound to the aminoacyl-tRNA.EF-Tu.GTP complex up to the GTP hydrolysis stage on the ribosome. This is Elongation factor Ts from Mycoplasma capricolum subsp. capricolum (strain California kid / ATCC 27343 / NCTC 10154).